The chain runs to 628 residues: (+)-alpha pinene synthase 1, chloroplastic (628 aa).

Mg(2+)-binding residues include Asp-379, Asp-383, and Asp-531. Positions Asp-379–Asp-383 match the DDXXD motif motif.

It belongs to the terpene synthase family. Tpsd subfamily. Mg(2+) serves as cofactor. It depends on Mn(2+) as a cofactor.

The protein resides in the plastid. It localises to the chloroplast. It carries out the reaction (2E)-geranyl diphosphate = (1R,5R)-alpha-pinene + diphosphate. The protein operates within terpene metabolism; oleoresin biosynthesis. It participates in secondary metabolite biosynthesis; terpenoid biosynthesis. Functionally, monoterpene synthase (TPS) involved in the biosynthesis of monoterpene natural products included in conifer oleoresin secretions and volatile emissions; these compounds contribute to biotic and abiotic stress defense against herbivores and pathogens. Catalyzes the conversion of (2E)-geranyl diphosphate (GPP) to (+)-alpha-pinene. This Pinus contorta (Shore pine) protein is (+)-alpha pinene synthase 1, chloroplastic.